A 349-amino-acid chain; its full sequence is Alanine racemase (349 aa).

K35 (proton acceptor; specific for D-alanine) is an active-site residue. N6-(pyridoxal phosphate)lysine is present on K35. R130 is a substrate binding site. Y244 acts as the Proton acceptor; specific for L-alanine in catalysis. M292 contributes to the substrate binding site.

This sequence belongs to the alanine racemase family. Pyridoxal 5'-phosphate serves as cofactor.

It catalyses the reaction L-alanine = D-alanine. The protein operates within amino-acid biosynthesis; D-alanine biosynthesis; D-alanine from L-alanine: step 1/1. Catalyzes the interconversion of L-alanine and D-alanine. May also act on other amino acids. The sequence is that of Alanine racemase (alr) from Cereibacter sphaeroides (strain KD131 / KCTC 12085) (Rhodobacter sphaeroides).